The chain runs to 272 residues: Shikimate dehydrogenase (NADP(+)) (272 aa).

Shikimate contacts are provided by residues 14-16 (SKS) and Thr61. The active-site Proton acceptor is Lys65. NADP(+) is bound at residue Glu77. Positions 86 and 102 each coordinate shikimate. Residues 126–130 (GAGGA), 149–154 (NRTVSR), and Met213 each bind NADP(+). Shikimate is bound at residue Tyr215. NADP(+) is bound at residue Gly237.

The protein belongs to the shikimate dehydrogenase family. As to quaternary structure, homodimer.

The catalysed reaction is shikimate + NADP(+) = 3-dehydroshikimate + NADPH + H(+). Its pathway is metabolic intermediate biosynthesis; chorismate biosynthesis; chorismate from D-erythrose 4-phosphate and phosphoenolpyruvate: step 4/7. Its function is as follows. Involved in the biosynthesis of the chorismate, which leads to the biosynthesis of aromatic amino acids. Catalyzes the reversible NADPH linked reduction of 3-dehydroshikimate (DHSA) to yield shikimate (SA). The chain is Shikimate dehydrogenase (NADP(+)) from Escherichia coli (strain SMS-3-5 / SECEC).